The primary structure comprises 109 residues: Urease subunit gamma (109 aa).

The protein belongs to the urease gamma subunit family. Heterotrimer of UreA (gamma), UreB (beta) and UreC (alpha) subunits. Three heterotrimers associate to form the active enzyme.

Its subcellular location is the cytoplasm. The catalysed reaction is urea + 2 H2O + H(+) = hydrogencarbonate + 2 NH4(+). The protein operates within nitrogen metabolism; urea degradation; CO(2) and NH(3) from urea (urease route): step 1/1. This chain is Urease subunit gamma, found in Natronomonas pharaonis (strain ATCC 35678 / DSM 2160 / CIP 103997 / JCM 8858 / NBRC 14720 / NCIMB 2260 / Gabara) (Halobacterium pharaonis).